The following is a 284-amino-acid chain: Asialoglycoprotein receptor 1 (284 aa).

The segment covering 1–18 has biased composition (basic and acidic residues); that stretch reads MTKDYQDFQHLDNDNDHH. The segment at 1–25 is disordered; the sequence is MTKDYQDFQHLDNDNDHHQLRRGPP. Residues 1 to 39 lie on the Cytoplasmic side of the membrane; that stretch reads MTKDYQDFQHLDNDNDHHQLRRGPPPTPRLLQRLCSGSR. Residues 5–8 carry the Endocytosis signal motif; sequence YQDF. A lipid anchor (S-palmitoyl cysteine) is attached at Cys35. A helical; Signal-anchor for type II membrane protein transmembrane segment spans residues 40–60; sequence LLLLSSSLSILLLVVVCVITS. Residues 59–117 are a coiled coil; that stretch reads TSQNSQLREDLLALRQNFSNLTVSTEDQVKALSTQGSSVGRKMKLVESKLEKQQKDLTE. Topologically, residues 61–284 are extracellular; that stretch reads QNSQLREDLL…VCETKLDKAN (224 aa). Asn75, Asn78, and Asn146 each carry an N-linked (GlcNAc...) asparagine glycan. Cystine bridges form between Cys153–Cys164, Cys181–Cys276, and Cys254–Cys268. The region spanning 160-277 is the C-type lectin domain; it reads YEGSCYWFSS…CRRPYRWVCE (118 aa). 10 residues coordinate Ca(2+): Val190, Glu196, Asp215, Gln239, Asp241, Glu252, Asp253, Asn264, Asp265, and Glu277.

As to quaternary structure, interacts with LASS2. Post-translationally, phosphorylated on a cytoplasmic Ser residue. As to expression, expressed exclusively in hepatic parenchymal cells.

Its subcellular location is the membrane. Its function is as follows. Mediates the endocytosis of plasma glycoproteins to which the terminal sialic acid residue on their complex carbohydrate moieties has been removed. The receptor recognizes terminal galactose and N-acetylgalactosamine units. After ligand binding to the receptor, the resulting complex is internalized and transported to a sorting organelle, where receptor and ligand are disassociated. The receptor then returns to the cell membrane surface. In Mus musculus (Mouse), this protein is Asialoglycoprotein receptor 1 (Asgr1).